The chain runs to 176 residues: Small ribosomal subunit protein uS5 (176 aa).

Residues 11–74 enclose the S5 DRBM domain; the sequence is LSEVLVDVNR…QAAKKRMMKV (64 aa).

Belongs to the universal ribosomal protein uS5 family. In terms of assembly, part of the 30S ribosomal subunit. Contacts proteins S4 and S8.

Functionally, with S4 and S12 plays an important role in translational accuracy. In terms of biological role, located at the back of the 30S subunit body where it stabilizes the conformation of the head with respect to the body. In Rickettsia peacockii (strain Rustic), this protein is Small ribosomal subunit protein uS5.